Consider the following 108-residue polypeptide: BH3-like motif-containing cell death inducer (108 aa).

Positions 5–12 match the BH3-like motif; that stretch reads LPIEGQEI.

As to expression, ubiquitously expressed.

It is found in the cytoplasm. Its subcellular location is the mitochondrion. Functions as a proapoptotic molecule through the caspase-dependent mitochondrial pathway of cell death. This chain is BH3-like motif-containing cell death inducer (BLID), found in Homo sapiens (Human).